Here is a 353-residue protein sequence, read N- to C-terminus: Lipase ZK262.3 (353 aa).

An N-terminal signal peptide occupies residues 1–22 (MPKNLRFSVFLLFLLCINSVFG). N-linked (GlcNAc...) asparagine glycans are attached at residues Asn32 and Asn64. The Nucleophile role is filled by Ser163. Asp221 acts as the Charge relay system in catalysis. An N-linked (GlcNAc...) asparagine glycan is attached at Asn267. Cysteines 277 and 288 form a disulfide. Residue His306 is the Charge relay system of the active site.

It belongs to the AB hydrolase superfamily. Lipase family.

Its subcellular location is the secreted. Probable lipase. The sequence is that of Lipase ZK262.3 from Caenorhabditis elegans.